The primary structure comprises 946 residues: Inositol-trisphosphate 3-kinase B (946 aa).

Disordered stretches follow at residues 19 to 128 (EMKS…EEAK), 156 to 288 (AQSS…TRSC), 308 to 472 (ARVT…GIPS), 486 to 561 (KDLK…RKAC), and 580 to 638 (GALE…HTLD). A phosphoserine mark is found at Ser-43, Ser-49, and Ser-71. Over residues 83-105 (NSSSGSGSGSSGSSVSSPSWAGR) the composition is skewed to low complexity. Phosphoserine occurs at positions 204 and 269. Residues 396–411 (TTVSVQSAESSDSLSW) are compositionally biased toward polar residues. Residues 445–458 (GGSPTLGLLGGSPS) show a composition bias toward low complexity. Over residues 524 to 534 (TGVQSEGTWES) the composition is skewed to polar residues. The span at 599–612 (SSSSASSTGFSSSY) shows a compositional bias: low complexity. ATP is bound by residues Ser-679, Lys-690, 730–732 (DDL), and Asp-743. Residues Lys-745 and Arg-766 each coordinate substrate. Residues 768–776 (DMYQKMIEV) form a calmodulin-binding region. 793 to 800 (KPRYMQWR) is a substrate binding site. The ATP site is built by Lys-817 and Asp-897. Substrate is bound at residue Lys-900.

This sequence belongs to the inositol phosphokinase (IPK) family. As to quaternary structure, interacts with DMTN.

The protein resides in the cytoplasm. Its subcellular location is the cytoskeleton. It is found in the endoplasmic reticulum. The catalysed reaction is 1D-myo-inositol 1,4,5-trisphosphate + ATP = 1D-myo-inositol 1,3,4,5-tetrakisphosphate + ADP + H(+). With respect to regulation, IP3K is activated by calcium and calmodulin. Form B is much more sensitive to calcium/calmodulin than form A. In terms of biological role, catalyzes the phosphorylation of 1D-myo-inositol 1,4,5-trisphosphate (InsP3) into 1D-myo-inositol 1,3,4,5-tetrakisphosphate and participates to the regulation of calcium homeostasis. The protein is Inositol-trisphosphate 3-kinase B of Homo sapiens (Human).